The sequence spans 201 residues: Protocatechuate 3,4-dioxygenase alpha chain (201 aa).

Arginine 134 serves as a coordination point for 3,4-dihydroxybenzoate.

This sequence belongs to the intradiol ring-cleavage dioxygenase family. As to quaternary structure, the enzyme is an oligomer of 12 copies of the alpha and beta chains. Fe(3+) serves as cofactor.

The catalysed reaction is 3,4-dihydroxybenzoate + O2 = 3-carboxy-cis,cis-muconate + 2 H(+). The protein operates within aromatic compound metabolism; beta-ketoadipate pathway; 3-carboxy-cis,cis-muconate from 3,4-dihydroxybenzoate: step 1/1. Its function is as follows. Plays an essential role in the utilization of numerous aromatic and hydroaromatic compounds via the beta-ketoadipate pathway. The chain is Protocatechuate 3,4-dioxygenase alpha chain (pcaG) from Pseudomonas putida (Arthrobacter siderocapsulatus).